Consider the following 511-residue polypeptide: Maturase K (511 aa).

Belongs to the intron maturase 2 family. MatK subfamily.

It localises to the plastid. The protein localises to the chloroplast. Functionally, usually encoded in the trnK tRNA gene intron. Probably assists in splicing its own and other chloroplast group II introns. In Phleum pratense (Common timothy), this protein is Maturase K.